The following is a 78-amino-acid chain: Large ribosomal subunit protein bL28 (78 aa).

The interval 1-21 (MSRVCQVTGKRPVSGNNRSHA) is disordered.

This sequence belongs to the bacterial ribosomal protein bL28 family.

The chain is Large ribosomal subunit protein bL28 from Yersinia enterocolitica serotype O:8 / biotype 1B (strain NCTC 13174 / 8081).